The primary structure comprises 188 residues: Transcription factor FapR (188 aa).

This sequence belongs to the FapR family.

Transcriptional factor involved in regulation of membrane lipid biosynthesis by repressing genes involved in fatty acid and phospholipid metabolism. This chain is Transcription factor FapR, found in Bacillus licheniformis (strain ATCC 14580 / DSM 13 / JCM 2505 / CCUG 7422 / NBRC 12200 / NCIMB 9375 / NCTC 10341 / NRRL NRS-1264 / Gibson 46).